We begin with the raw amino-acid sequence, 780 residues long: Protein phosphatase 1 regulatory subunit 21 (780 aa).

Coiled coils occupy residues 1-209 (MASA…NLHE) and 556-605 (ESRE…DRLR). Residues 84-104 (EPRGKKNKKSGESSSQLSQEQ) form a disordered region. Residues 95 to 104 (ESSSQLSQEQ) show a composition bias toward low complexity. Phosphothreonine is present on threonine 652. Residues 694-742 (AECRALSKRLALAEKSKETLTEEMRLASQNISRLQDELMTTKRSYEDQL) adopt a coiled-coil conformation.

Component of the FERRY complex, composed of five subunits: TBCK, PPP1R21, FERRY3, CRYZL1 and GATAD1, with a ratio of 1:2:1:2:4 respectively. PPP1R21 serves as a binding hub connecting all five complex subunits to mediate the binding to specific mitochondrial mRNAs. Interacts with the GTP-bound form of RAB5A (via its C-terminal region); linking the mRNP complex onto trafficking endosomes for active mRNA transport. Interacts with PPP1CA. In terms of tissue distribution, expressed at 16 dpc in the cortex (at protein level).

The protein resides in the early endosome. In terms of biological role, component of the FERRY complex (Five-subunit Endosomal Rab5 and RNA/ribosome intermediary). The FERRY complex directly interacts with mRNAs and RAB5A, and functions as a RAB5A effector involved in the localization and the distribution of specific mRNAs most likely by mediating their endosomal transport. The complex recruits mRNAs and ribosomes to early endosomes through direct mRNA-interaction. In the complex, PPP1R21 serves as a binding hub connecting all five complex subunits and mediating the binding to mRNA and early endosomes via RAB5A. Putative regulator of protein phosphatase 1 (PP1) activity. May play a role in the endosomal sorting process or in endosome maturation pathway. The polypeptide is Protein phosphatase 1 regulatory subunit 21 (Ppp1r21) (Mus musculus (Mouse)).